The sequence spans 388 residues: Chorismate synthase (388 aa).

2 residues coordinate NADP(+): Arg-39 and Arg-45. Residues 132 to 134 (RSS), 251 to 252 (NA), Gly-296, 311 to 315 (KPIPT), and Arg-337 contribute to the FMN site.

It belongs to the chorismate synthase family. In terms of assembly, homotetramer. FMNH2 is required as a cofactor.

The enzyme catalyses 5-O-(1-carboxyvinyl)-3-phosphoshikimate = chorismate + phosphate. It participates in metabolic intermediate biosynthesis; chorismate biosynthesis; chorismate from D-erythrose 4-phosphate and phosphoenolpyruvate: step 7/7. In terms of biological role, catalyzes the anti-1,4-elimination of the C-3 phosphate and the C-6 proR hydrogen from 5-enolpyruvylshikimate-3-phosphate (EPSP) to yield chorismate, which is the branch point compound that serves as the starting substrate for the three terminal pathways of aromatic amino acid biosynthesis. This reaction introduces a second double bond into the aromatic ring system. The protein is Chorismate synthase of Staphylococcus aureus (strain MW2).